The chain runs to 256 residues: Major prion protein (256 aa).

A signal peptide spans 1 to 24 (MVKSHIGSWILVLFVAMWSDVGLC). The interval 25–233 (KKRPKPGGGW…ESQAYYQRGA (209 aa)) is interaction with GRB2, ERI3 and SYN1. Positions 28–110 (PKPGGGWNTG…QWNKPSKPKT (83 aa)) are disordered. A run of 5 repeats spans residues 54–62 (PQGGGGWGQ), 63–70 (PHGGGWGQ), 71–78 (PHGGGWGQ), 79–86 (PHGGGWGQ), and 87–95 (PHGGGGWGQ). A 5 X 8 AA tandem repeats of P-H-G-G-G-W-G-Q region spans residues 54–95 (PQGGGGWGQPHGGGWGQPHGGGWGQPHGGGWGQPHGGGGWGQ). Positions 55-97 (QGGGGWGQPHGGGWGQPHGGGWGQPHGGGWGQPHGGGGWGQGG) are enriched in gly residues. The Cu(2+) site is built by H64, G65, G66, H72, G73, G74, H80, G81, G82, H88, G90, and G91. C182 and C217 are joined by a disulfide. 2 N-linked (GlcNAc...) asparagine glycosylation sites follow: N184 and N200. A233 carries GPI-anchor amidated alanine lipidation. A propeptide spans 234–256 (SVILFSSPPVILLISFLIFLIVG) (removed in mature form).

This sequence belongs to the prion family. In terms of assembly, monomer and homodimer. Has a tendency to aggregate into amyloid fibrils containing a cross-beta spine, formed by a steric zipper of superposed beta-strands. Soluble oligomers may represent an intermediate stage on the path to fibril formation. Copper binding may promote oligomerization. Interacts with GRB2, APP, ERI3/PRNPIP and SYN1. Mislocalized cytosolically exposed PrP interacts with MGRN1; this interaction alters MGRN1 subcellular location and causes lysosomal enlargement. Interacts with KIAA1191.

The protein resides in the cell membrane. It is found in the golgi apparatus. Its primary physiological function is unclear. Has cytoprotective activity against internal or environmental stresses. May play a role in neuronal development and synaptic plasticity. May be required for neuronal myelin sheath maintenance. May play a role in iron uptake and iron homeostasis. Soluble oligomers are toxic to cultured neuroblastoma cells and induce apoptosis (in vitro). Association with GPC1 (via its heparan sulfate chains) targets PRNP to lipid rafts. Also provides Cu(2+) or Zn(2+) for the ascorbate-mediated GPC1 deaminase degradation of its heparan sulfate side chains. In Budorcas taxicolor (Golden takin), this protein is Major prion protein (PRNP).